The primary structure comprises 530 residues: Vesicular acetylcholine transporter (530 aa).

The Cytoplasmic portion of the chain corresponds to 1 to 33 (MEPTAPTGQARAAATKLSEAVGAALQEPQRQRR). A helical transmembrane segment spans residues 34–54 (LVLVIVCVALLLDNMLYMVIV). Residues 55–125 (PIVPDYIAHM…PTESEDVKIG (71 aa)) lie on the Lumenal, vesicle side of the membrane. N-linked (GlcNAc...) asparagine glycosylation is found at Asn-89 and Asn-96. The chain crosses the membrane as a helical span at residues 126 to 146 (VLFASKAILQLLVNPLSGPFI). The Cytoplasmic portion of the chain corresponds to 147 to 152 (DRMSYD). Residues 153 to 173 (VPLLIGLGVMFASTVMFAFAE) traverse the membrane as a helical segment. The Lumenal, vesicle segment spans residues 174-182 (DYATFFAAR). A helical transmembrane segment spans residues 183-203 (SLQGLGSAFADTSGIAMIADK). Over 204 to 213 (YPEEPERSRA) the chain is Cytoplasmic. A helical membrane pass occupies residues 214–234 (LGVALAFISFGSLVAPPFGGI). Residues 235-242 (LYEFAGKR) lie on the Lumenal, vesicle side of the membrane. The helical transmembrane segment at 243 to 263 (VPFLVLAAVSLFDALLLLAVA) threads the bilayer. Residues 264–288 (KPFSAAARARANLPVGTPIHRLMLD) are Cytoplasmic-facing. A helical transmembrane segment spans residues 289 to 309 (PYIAVVAGALTTCNIPLAFLE). The Lumenal, vesicle segment spans residues 310–325 (PTIATWMKHTMAASEW). A helical membrane pass occupies residues 326–346 (EMGMVWLPAFVPHVLGVYLTV). Over 347–356 (RLAARYPHLQ) the chain is Cytoplasmic. A helical membrane pass occupies residues 357-377 (WLYGALGLAVIGVSSCVVPAC). At 378–388 (RSFAPLVVSLC) the chain is on the lumenal, vesicle side. Residues 389 to 409 (GLCFGIALVDTALLPTLAFLV) form a helical membrane-spanning segment. Residues 410–422 (DVRHVSVYGSVYA) are Cytoplasmic-facing. A helical transmembrane segment spans residues 423–443 (IADISYSVAYALGPIVAGHIV). Residues 444–447 (HSLG) lie on the Lumenal, vesicle side of the membrane. Residues 448 to 468 (FEQLSLGMGLANLLYAPVLLL) form a helical membrane-spanning segment. Residues 469–530 (LRNVGLLTRS…EDDYNYYSRS (62 aa)) are Cytoplasmic-facing. Residues 471–530 (NVGLLTRSRSERDVLLDEPPQGLYDAVRLREVQGKDGGEPCSPPGPFDGCEDDYNYYSRS) form a mediates interaction with SEC14L1 region. The segment at 504-530 (GKDGGEPCSPPGPFDGCEDDYNYYSRS) is disordered.

It belongs to the major facilitator superfamily. Vesicular transporter family. As to quaternary structure, interacts with SEC14L1. As to expression, expressed in the spinal cord, brain (excluding the cerebellum), brain stem and cholinergic tissues. Not expressed in peripheral tissues such as liver and kidney.

It is found in the cytoplasmic vesicle. Its subcellular location is the secretory vesicle. The protein localises to the synaptic vesicle membrane. It carries out the reaction acetylcholine(out) + 2 H(+)(in) = acetylcholine(in) + 2 H(+)(out). The enzyme catalyses choline(in) + 2 H(+)(out) = choline(out) + 2 H(+)(in). It catalyses the reaction serotonin(in) + 2 H(+)(out) = serotonin(out) + 2 H(+)(in). Electrogenic antiporter that exchanges one cholinergic neurotransmitter, acetylcholine or choline, with two intravesicular protons across the membrane of synaptic vesicles. Uses the electrochemical proton gradient established by the V-type proton-pump ATPase to store neurotransmitters inside the vesicles prior to their release via exocytosis. Determines cholinergic vesicular quantal size at presynaptic nerve terminals in developing neuro-muscular junctions with an impact on motor neuron differentiation and innervation pattern. Part of forebrain cholinergic system, regulates hippocampal synapse transmissions that underlie spatial memory formation. Can transport serotonin. This chain is Vesicular acetylcholine transporter (Slc18a3), found in Mus musculus (Mouse).